The primary structure comprises 524 residues: Alkaline phosphatase, tissue-nonspecific isozyme (524 aa).

A signal peptide spans 1–17 (MISPFLLLAIGTCFASS). Asp60 contributes to the Mg(2+) binding site. Zn(2+)-binding residues include Asp60 and Ser110. Ser110 (phosphoserine intermediate) is an active-site residue. Ser110 is modified (phosphoserine). Cys139 and Cys201 form a disulfide bridge. An N-linked (GlcNAc...) asparagine glycan is attached at Asn140. Residue Thr173 participates in Mg(2+) binding. Asn230 carries N-linked (GlcNAc...) asparagine glycosylation. Ca(2+) is bound at residue Glu235. The N-linked (GlcNAc...) asparagine glycan is linked to Asn271. Phe290 and Glu291 together coordinate Ca(2+). Asn303 carries N-linked (GlcNAc...) asparagine glycosylation. A Ca(2+)-binding site is contributed by Asp306. Glu332 lines the Mg(2+) pocket. Zn(2+)-binding residues include Asp337, His341, Asp378, and His379. N-linked (GlcNAc...) asparagine glycosylation is present at Asn430. Residue His454 coordinates Zn(2+). A disulfide bridge connects residues Cys489 and Cys497. A lipid anchor (GPI-anchor amidated serine) is attached at Ser499. A propeptide spans 500 to 524 (ASSSGSPSPGPLLLLLALLPLGSLF) (removed in mature form).

This sequence belongs to the alkaline phosphatase family. In terms of assembly, homodimer. It depends on Mg(2+) as a cofactor. Requires Zn(2+) as cofactor. Ca(2+) is required as a cofactor. Post-translationally, N-glycosylated.

The protein localises to the cell membrane. Its subcellular location is the extracellular vesicle membrane. It is found in the mitochondrion membrane. It localises to the mitochondrion intermembrane space. It catalyses the reaction a phosphate monoester + H2O = an alcohol + phosphate. It carries out the reaction diphosphate + H2O = 2 phosphate + H(+). The catalysed reaction is pyridoxal 5'-phosphate + H2O = pyridoxal + phosphate. The enzyme catalyses phosphoethanolamine + H2O = ethanolamine + phosphate. It catalyses the reaction N-phosphocreatine + H2O = creatine + phosphate. It carries out the reaction ATP + H2O = ADP + phosphate + H(+). The catalysed reaction is ADP + H2O = AMP + phosphate + H(+). The enzyme catalyses AMP + H2O = adenosine + phosphate. Phosphatase activity is specifically inhibited by 5-((5-chloro-2-methoxyphenyl)sulfonamido)nicotinamide (SBI-425). Functionally, alkaline phosphatase that metabolizes various phosphate compounds and plays a key role in skeletal mineralization and adaptive thermogenesis. Has broad substrate specificity and can hydrolyze a considerable variety of compounds: however, only a few substrates, such as diphosphate (inorganic pyrophosphate; PPi), pyridoxal 5'-phosphate (PLP) and N-phosphocreatine are natural substrates. Plays an essential role in skeletal and dental mineralization via its ability to hydrolyze extracellular diphosphate, a potent mineralization inhibitor, to phosphate: it thereby promotes hydroxyapatite crystal formation and increases inorganic phosphate concentration. Acts in a non-redundant manner with PHOSPHO1 in skeletal mineralization: while PHOSPHO1 mediates the initiation of hydroxyapatite crystallization in the matrix vesicles (MVs), ALPL/TNAP catalyzes the spread of hydroxyapatite crystallization in the extracellular matrix. Also promotes dephosphorylation of osteopontin (SSP1), an inhibitor of hydroxyapatite crystallization in its phosphorylated state; it is however unclear whether ALPL/TNAP mediates SSP1 dephosphorylation via a direct or indirect manner. Catalyzes dephosphorylation of PLP to pyridoxal (PL), the transportable form of vitamin B6, in order to provide a sufficient amount of PLP in the brain, an essential cofactor for enzymes catalyzing the synthesis of diverse neurotransmitters. Additionally, also able to mediate ATP degradation in a stepwise manner to adenosine, thereby regulating the availability of ligands for purinergic receptors. Also capable of dephosphorylating microbial products, such as lipopolysaccharides (LPS) as well as other phosphorylated small-molecules, such as poly-inosine:cytosine (poly I:C). Acts as a key regulator of adaptive thermogenesis as part of the futile creatine cycle: localizes to the mitochondria of thermogenic fat cells and acts by mediating hydrolysis of N-phosphocreatine to initiate a futile cycle of creatine dephosphorylation and phosphorylation. During the futile creatine cycle, creatine and N-phosphocreatine are in a futile cycle, which dissipates the high energy charge of N-phosphocreatine as heat without performing any mechanical or chemical work. The sequence is that of Alkaline phosphatase, tissue-nonspecific isozyme (ALPL) from Bos taurus (Bovine).